The sequence spans 427 residues: Transcriptional enhancer factor TEF-3 (427 aa).

The tract at residues 1–32 is disordered; that stretch reads MTSNEWSSPDSPEGSSISGGSQALDKPIDNDA. Positions 7–21 are enriched in low complexity; the sequence is SSPDSPEGSSISGGS. A DNA-binding region (TEA) is located at residues 29 to 105; it reads DNDAEGVWSP…QVLARRKARE (77 aa). A Nuclear localization signal motif is present at residues 78-94; it reads IKLRTGKTRTRKQVSSH. Residues 163–206 are disordered; that stretch reads QPGTSHDVKPFSQNTYPVQPPLPLPGFESPAGPTPSPSAPLAPP. Over residues 194 to 205 the composition is skewed to pro residues; sequence GPTPSPSAPLAP.

As to quaternary structure, interacts with WWTR1/TAZ. Interacts with YAP1. As to expression, preferentially expressed in lung and in skeletal muscle.

Its subcellular location is the nucleus. Its function is as follows. Transcription factor which plays a key role in the Hippo signaling pathway, a pathway involved in organ size control and tumor suppression by restricting proliferation and promoting apoptosis. The core of this pathway is composed of a kinase cascade wherein MST1/MST2, in complex with its regulatory protein SAV1, phosphorylates and activates LATS1/2 in complex with its regulatory protein MOB1, which in turn phosphorylates and inactivates YAP1 oncoprotein and WWTR1/TAZ. Acts by mediating gene expression of YAP1 and WWTR1/TAZ, thereby regulating cell proliferation, migration and epithelial mesenchymal transition (EMT) induction. Binds specifically and non-cooperatively to the Sph and GT-IIC 'enhansons' (5'-GTGGAATGT-3') and activates transcription. Binds to the M-CAT motif. Might play a role in the embryonic development of skeletal muscle. This chain is Transcriptional enhancer factor TEF-3 (Tead4), found in Mus musculus (Mouse).